Here is a 1485-residue protein sequence, read N- to C-terminus: Cystic fibrosis transmembrane conductance regulator (1485 aa).

The Cytoplasmic portion of the chain corresponds to 1 to 78; it reads MQRSPVEDAN…SLLRAMARCY (78 aa). Residues 79-99 form a helical membrane-spanning segment; the sequence is IKPFLLFGFLLYIGEATKTVQ. The 271-residue stretch at 83–353 folds into the ABC transmembrane type-1 1 domain; it reads LLFGFLLYIG…CMVLRMTVTR (271 aa). The Extracellular portion of the chain corresponds to 100–123; that stretch reads PQLLGRIIASFDPAHEPERANGYF. Residues 124–149 traverse the membrane as a helical segment; it reads LAFGLGLLFTARFLLLQPAMFGLHHL. Topologically, residues 150–195 are cytoplasmic; that stretch reads GMQIRIALFSIIYKKTLKLSSRVLDKISTGQLVSLMSANLGKFDQS. A helical membrane pass occupies residues 196–216; the sequence is LGMAHFIWISPLQCILCTGLI. At 217–224 the chain is on the extracellular side; sequence WELIDVNS. A helical transmembrane segment spans residues 225 to 245; the sequence is FCALAAISLLGVLQAFLSHKM. The Cytoplasmic segment spans residues 246–299; the sequence is GPYKAQKVLLTNKRLALTSEIMENLHSVKAYGWEEIMETLIKNIRQDEVKLTRK. Residues 300 to 320 form a helical membrane-spanning segment; the sequence is IGSLRYFYSSAYFFSAIFVIV. The Extracellular segment spans residues 321–340; the sequence is AAVVPHALSRGINLRRIFTT. A helical transmembrane segment spans residues 341–363; sequence LSYCMVLRMTVTRQLPGSIQMWY. Topologically, residues 364-856 are cytoplasmic; it reads DTMRLIWKIE…YVRYVSNNKS (493 aa). Residues W402, 457–464, and Q492 each bind ATP; that span reads GSMGSGKS. An ABC transporter 1 domain is found at 424 to 645; the sequence is NGDAGLFFTN…RPDFSSLLLG (222 aa). A disordered R region region spans residues 653–826; that stretch reads SAERRCSILT…GILEEENIEA (174 aa). A helical transmembrane segment spans residues 857 to 877; the sequence is LLYVLIFILFIAAIEIAGSVA. Positions 860–1163 constitute an ABC transmembrane type-1 2 domain; sequence VLIFILFIAA…CVATSIAVDG (304 aa). Over 878–924 the chain is Extracellular; it reads GIFLITDELWREEHQRSEPNMTKHSNASSSGQTYAITVTPTSSYYIL. N-linked (GlcNAc...) asparagine glycosylation is found at N897 and N903. A discontinuously helical transmembrane segment spans residues 925–946; it reads YIYVATSESLLAMGFFRGLPFV. Over 947 to 996 the chain is Cytoplasmic; it reads HTTITISKKLHQKMLHAVLSAPMSVLNTMKTGRIMNRFTKDMATIDDMLP. The chain crosses the membrane as a helical span at residues 997-1019; that stretch reads LLMFDFVQLTVVVVGCILVVSIV. Residues 1020-1021 are Extracellular-facing; the sequence is RP. A helical transmembrane segment spans residues 1022–1042; that stretch reads YIFLAATPLAIIFIVMRKYFL. Residues 1043 to 1103 are Cytoplasmic-facing; it reads RTGQQLKQLE…TATWFLYLST (61 aa). Residues 1104 to 1124 traverse the membrane as a helical segment; the sequence is LRWFLFRADILFVFFFTLAAW. Over 1125 to 1138 the chain is Extracellular; that stretch reads IAVGTNQDKPGEIG. A helical membrane pass occupies residues 1139-1159; it reads IIICLAMLILGTFQWCVATSI. The Cytoplasmic segment spans residues 1160 to 1485; that stretch reads AVDGMMRSVD…AEDNIQDTRL (326 aa). One can recognise an ABC transporter 2 domain in the interval 1211–1444; that stretch reads IEVRNLTVKY…TSHLKQAISP (234 aa). Residues Y1220 and 1245–1252 contribute to the ATP site; that span reads GRTGSGKS. The segment at 1452–1485 is disordered; sequence PRRNSSMRTPQSKLSSVTQTLQEEAEDNIQDTRL. The segment covering 1454 to 1473 has biased composition (polar residues); sequence RNSSMRTPQSKLSSVTQTLQ. Acidic residues predominate over residues 1474–1485; it reads EEAEDNIQDTRL. Residues 1483-1485 carry the PDZ-binding motif; that stretch reads TRL.

This sequence belongs to the ABC transporter superfamily. ABCC family. CFTR transporter (TC 3.A.1.202) subfamily. As to quaternary structure, monomer; does not require oligomerization for channel activity. Interacts with cse1l; this interaction may down-regulate cftr activity. In terms of processing, phosphorylated; this activates the channel. Dephosphorylation strongly decreases ATPase activity. Phosphorylation at PKA sites activates the channel. Phosphorylation at PKC sites enhances the response to phosphorylation by PKA. In terms of tissue distribution, detected in gut epithelium (at protein level). Detected in kidney, spleen, intestine and liver. Detected in pancreatic duct epithelium at 5 dpf and throughout adult life.

Its subcellular location is the apical cell membrane. The protein localises to the early endosome membrane. It is found in the cell membrane. The protein resides in the recycling endosome membrane. It localises to the endoplasmic reticulum membrane. The catalysed reaction is ATP + H2O + closed Cl(-) channel = ADP + phosphate + open Cl(-) channel.. It carries out the reaction chloride(in) = chloride(out). It catalyses the reaction hydrogencarbonate(in) = hydrogencarbonate(out). The enzyme catalyses ATP + H2O = ADP + phosphate + H(+). Its function is as follows. Epithelial ion channel that plays an important role in the regulation of epithelial ion and water transport and fluid homeostasis. Mediates the transport of chloride ions across the cell membrane. Possesses an intrinsic ATPase activity and utilizes ATP to gate its channel; the passive flow of anions through the channel is gated by cycles of ATP binding and hydrolysis by the ATP-binding domains. The ion channel is also permeable to HCO(3)(-); selectivity depends on the extracellular chloride concentration. Exerts its function also by modulating the activity of other ion channels and transporters. Contributes to the regulation of the pH and the ion content of the epithelial fluid layer. Required for normal fluid homeostasis in the gut. Required for normal volume expansion and cell shape changes of Kupffer's vesicle during embryonic development and for normal establishment of left-right body patterning. Required for normal resistance to infection by P.aeruginosa strain PA14 and strain SMC573. The polypeptide is Cystic fibrosis transmembrane conductance regulator (Danio rerio (Zebrafish)).